Consider the following 170-residue polypeptide: NADH-quinone oxidoreductase subunit B (170 aa).

Positions 42, 43, 107, and 136 each coordinate [4Fe-4S] cluster.

It belongs to the complex I 20 kDa subunit family. NDH-1 is composed of 14 different subunits. Subunits NuoB, C, D, E, F, and G constitute the peripheral sector of the complex. [4Fe-4S] cluster is required as a cofactor.

It localises to the cell inner membrane. The catalysed reaction is a quinone + NADH + 5 H(+)(in) = a quinol + NAD(+) + 4 H(+)(out). Its function is as follows. NDH-1 shuttles electrons from NADH, via FMN and iron-sulfur (Fe-S) centers, to quinones in the respiratory chain. The immediate electron acceptor for the enzyme in this species is believed to be ubiquinone. Couples the redox reaction to proton translocation (for every two electrons transferred, four hydrogen ions are translocated across the cytoplasmic membrane), and thus conserves the redox energy in a proton gradient. This Campylobacter concisus (strain 13826) protein is NADH-quinone oxidoreductase subunit B.